Here is a 170-residue protein sequence, read N- to C-terminus: Ubiquitin-conjugating enzyme E2 G1 (170 aa).

An N-acetylmethionine modification is found at methionine 1. Threonine 2 is subject to N-acetylthreonine; in Ubiquitin-conjugating enzyme E2 G1, N-terminally processed. Positions 5 to 166 (QSALLLRRQL…VARCVRKSQE (162 aa)) constitute a UBC core domain. Cysteine 90 functions as the Glycyl thioester intermediate in the catalytic mechanism.

This sequence belongs to the ubiquitin-conjugating enzyme family. Autoubiquitinated in vitro. In terms of tissue distribution, widely expressed, mainly in skeletal muscle.

The catalysed reaction is S-ubiquitinyl-[E1 ubiquitin-activating enzyme]-L-cysteine + [E2 ubiquitin-conjugating enzyme]-L-cysteine = [E1 ubiquitin-activating enzyme]-L-cysteine + S-ubiquitinyl-[E2 ubiquitin-conjugating enzyme]-L-cysteine.. The protein operates within protein modification; protein ubiquitination. In terms of biological role, accepts ubiquitin from the E1 complex and catalyzes its covalent attachment to other proteins. In vitro catalyzes 'Lys-48'-, as well as 'Lys-63'-linked polyubiquitination. May be involved in degradation of muscle-specific proteins. Mediates polyubiquitination of CYP3A4. The chain is Ubiquitin-conjugating enzyme E2 G1 (UBE2G1) from Homo sapiens (Human).